A 219-amino-acid chain; its full sequence is UPF0319 protein MS0844 (219 aa).

The first 21 residues, 1–21 (MKFRLTALAVAALLTSTASFA), serve as a signal peptide directing secretion.

This sequence belongs to the UPF0319 family.

The polypeptide is UPF0319 protein MS0844 (Mannheimia succiniciproducens (strain KCTC 0769BP / MBEL55E)).